Here is a 500-residue protein sequence, read N- to C-terminus: Probable cation transporter HKT1;4 (500 aa).

Topologically, residues 1–12 (MPTSRRALAGGA) are cytoplasmic. 2 helical membrane-spanning segments follow: residues 13-33 (LSMH…LLGV) and 74-94 (LVVL…LVGL). Residues 95–156 (ASKWSKLRSD…ADTLRHNAVR (62 aa)) are Cytoplasmic-facing. The segment at 121–145 (ADIDGGDVENPTSSGEEAASRRRPM) is disordered. Transmembrane regions (helical) follow at residues 157-177 (ALFY…AVAV) and 239-259 (VLAG…AAAA). Over 260-290 (ATRREELVEMAREGGRAAAAGYAHLMPARRC) the chain is Cytoplasmic. 2 consecutive transmembrane segments (helical) span residues 291 to 311 (WMLA…VCGM) and 346 to 366 (LSIL…LPPY). Residues 367–390 (TTWFPFEENSTTKDSNAENQGIRL) lie on the Cytoplasmic side of the membrane. The next 2 helical transmembrane spans lie at 391-411 (LEST…AICI) and 464-484 (GFVG…MFFG). Over 485–500 (RLKKFSMKGGKAWKLS) the chain is Cytoplasmic.

It belongs to the TrkH potassium transport family. HKT (TC 2.A.38.3) subfamily.

The protein localises to the membrane. Functionally, probable cation transporter. May be involved in regulation of potassium-sodium homeostasis. This Oryza sativa subsp. japonica (Rice) protein is Probable cation transporter HKT1;4.